Here is a 1538-residue protein sequence, read N- to C-terminus: MMRTAFSRISGMTAQQRTSLADEFDRVSRIAVAEPVAVVGIGCRFPGDVDGPESFWDFLVAGRNAISTVPADRWDAEAFYHPDPLTPGRMTTKWGGFVPDVAGFDAEFFGITPREAAAMDPQQRMLLEVAWEALEHAGIPPDSLGGTRTAVMMGVYFNEYQSMLAASPQNVDAYSGTGNAHSITVGRISYLLGLRGPAVAVDTACSSSLVAVHLACQSLRLRETDLALAGGVSITLRPETQIAISAWGLLSPQGRCAAFDAAADGFVRGEGAGVVVLKRLTDAVRDGDQVLAVVRGSAVNQDGRSNGVTAPNTAAQCDVIADALRSGDVAPDSVNYVEAHGTGTVLGDPIEFEALAATYGHGGDACALGAVKTNIGHLEAAAGIAGFIKATLAVQRATIPPNLHFSQWNPAIDAASTRFFVPTQNSPWPTAEGPRRAAVSSFGLGGTNAHVIIEQGSELAPVSEGGEDTGVSTLVVTGKTAQRMAATAQVLADWMEGPGAEVAVADVAHTVNHHRARQATFGTVVARDRAQAIAGLRALAAGQHAPGVVSHQDGSPGPGTVFVYSGRGSQWAGMGRQLLADEPAFAAAVAELEPVFVEQAGFSLRDVIATGKELVGIEQIQLGLIGMQLTLTELWRSYGVQPDLVIGHSMGEVAAAVVAGALTPAEGLRVTATRARLMAPLSGQGGMALLGLDAAATEALIADYPQVTVGIYNSPRQTVIAGPTEQIDELIARVRAQNRFASRVNIEVAPHNPAMDALQPAMRSELADLTPRTPTIGIISTTYADLHTQPIFDAEHWATNMRNPVRFQQAIASAGSGADGAYHTFIEISAHPLLTQAIADTLEDAHRPTKSAAKYLSIGTLQRDADDTVTFRTNLYTADIAHPPHTCHPPEPHPTIPTTPWQHTHHWIATTHPSTAAPEDPGSNKVVVNGQSTSESRALEDWCHQLAWPIRPAVSADPPSTAAWLVVADNELCHELARAADSRVDSLSPPALAAGSDPAALLDALRGVDNVLYAPPVPGELLDIESAYQVFHATRRLAAAMVASSATAISPPKLFIMTRNAQPISEGDRANPGHAVLWGLGRSLALEHPEIWGGIIDLDDSMPAELAVRHVLTAAHGTDGEDQVVYRSGARHVPRLQRRTLPGKPVTLNADASQLVIGATGNIGPHLIRQLARMGAKTIVAMARKPGALDELTQCLAATGTDLIAVAADATDPAAMQTLFDRFGTELPPLEGIYLAAFAGRPALLSEMTDDDVTTMFRPKLDALALLHRLSLKSPVRHFVLFSSVSGLLGSRWLAHYTATSAFLDSFAGARRTMGLPATVVDWGLWKSLADVQKDATQISAESGLQPMADEVAIGALPLVMNPDAAVATVVVAADWPLLAAAYRTRGALRIVDDLLPAPEDVGKGESEFRTSLRSCPAEKRRDMLFDHVGALAATVMGMPPTEPLDPSAGFFQLGMDSLMSVTLQRALSESLGEFLPASVVFDYPTVYSLTDYLATVLPELLEIGATAVATQQATDSYHELTEAELLEQLSERLRGTQ.

Positions 33–455 (AEPVAVVGIG…GTNAHVIIEQ (423 aa)) constitute a Ketosynthase family 3 (KS3) domain. Active-site for beta-ketoacyl synthase activity residues include cysteine 205, histidine 340, and histidine 377. The acyltransferase stretch occupies residues 553-882 (DGSPGPGTVF…TNLYTADIAH (330 aa)). Serine 649 functions as the For malonyltransferase activity in the catalytic mechanism. 1153 to 1196 (SQLVIGATGNIGPHLIRQLARMGAKTIVAMARKPGALDELTQCL) lines the NADP(+) pocket. The interval 1153-1328 (SQLVIGATGN…TVVDWGLWKS (176 aa)) is beta-ketoacyl reductase. One can recognise a Carrier domain in the interval 1423 to 1498 (DMLFDHVGAL…SLTDYLATVL (76 aa)). At serine 1458 the chain carries O-(pantetheine 4'-phosphoryl)serine.

It depends on NADP(+) as a cofactor. Requires pantetheine 4'-phosphate as cofactor.

The catalysed reaction is icosanoyl-[(phenol)carboxyphthiodiolenone synthase] + 2 (S)-methylmalonyl-CoA + 3 malonyl-CoA + 5 NADPH + 10 H(+) = C32-carboxyphthiodiolenone-[(phenol)carboxyphthiodiolenone synthase] + 5 CO2 + 5 NADP(+) + 5 CoA + 2 H2O. It carries out the reaction docosanoyl-[(phenol)carboxyphthiodiolenone synthase] + 2 (S)-methylmalonyl-CoA + 3 malonyl-CoA + 5 NADPH + 10 H(+) = C34-carboxyphthiodiolenone-[(phenol)carboxyphthiodiolenone synthase] + 5 CO2 + 5 NADP(+) + 5 CoA + 2 H2O. It catalyses the reaction 17-(4-hydroxyphenyl)heptadecanoyl-[(phenol)carboxyphthiodiolenone synthase] + 2 (S)-methylmalonyl-CoA + 3 malonyl-CoA + 5 NADPH + 10 H(+) = C35-(phenol)carboxyphthiodiolenone-[(phenol)carboxyphthiodiolenone synthase] + 5 CO2 + 5 NADP(+) + 5 CoA + 2 H2O. The enzyme catalyses 19-(4-hydroxyphenyl)nonadecanoyl-[(phenol)carboxyphthiodiolenone synthase] + 2 (S)-methylmalonyl-CoA + 3 malonyl-CoA + 5 NADPH + 10 H(+) = C37-(phenol)carboxyphthiodiolenone-[(phenol)carboxyphthiodiolenone synthase] + 5 CO2 + 5 NADP(+) + 5 CoA + 2 H2O. The protein operates within lipid metabolism; fatty acid biosynthesis. Functionally, part of the PpsABCDE complex involved in the biosynthesis of the lipid core common to phthiocerols and phenolphthiocerols by successive additions of malonyl-CoA or methylmalonyl-CoA extender units. PpsA can accept as substrate the activated forms of either icosanoyl (C20), docosanoyl (C22) or lignoceroyl (C24) groups from FadD26, or a (4-hydroxyphenyl)-C17 or (4-hydroxyphenyl)-C19 fatty acyl from FadD29. PpsA initiates the biosynthesis and extends its substrate using a malonyl-CoA extender unit. The PpsB and PpsC proteins add the second and third malonyl-CoA extender units. PpsD adds an (R)-methylmalonyl unit and PpsE adds a second (R)-methylmalonyl unit. The incorporation of the methylmalonyl units results in formation of two branched methyl groups in the elongated product. The chain is Phenolphthiocerol/phthiocerol polyketide synthase subunit B (ppsB) from Mycobacterium bovis (strain ATCC BAA-935 / AF2122/97).